The following is a 261-amino-acid chain: UPF0328 protein ECU03_1620 (261 aa).

The protein belongs to the UPF0328 family.

This chain is UPF0328 protein ECU03_1620, found in Encephalitozoon cuniculi (strain GB-M1) (Microsporidian parasite).